Reading from the N-terminus, the 417-residue chain is Phosphoglycerate kinase (417 aa).

The (2R)-3-phosphoglycerate site is built by Val-23, Asp-24, Phe-25, Asn-26, Gln-38, Arg-39, Ser-62, His-63, Gly-65, Arg-66, Leu-122, Arg-123, His-170, and Arg-171. Gly-214 is a binding site for ADP. Gly-214 lines the CDP pocket. Residues Ala-215 and Lys-216 each coordinate AMP. Ala-215 contributes to the ATP binding site. Ala-215 lines the Mg(2+) pocket. Asp-219 contributes to the CDP binding site. Asp-219 contacts Mg(2+). AMP is bound at residue Lys-220. Residue Lys-220 coordinates ATP. Gly-238 is a binding site for ADP. Gly-238 lines the CDP pocket. The AMP site is built by Gly-239 and Gly-313. The ATP site is built by Gly-239 and Gly-313. Gly-338, Val-340, and Phe-343 together coordinate CDP. Phe-343 is an ADP binding site. Glu-344 provides a ligand contact to AMP. Residues Glu-344, Asp-375, and Thr-376 each coordinate ATP. Asp-375 provides a ligand contact to Mg(2+).

It belongs to the phosphoglycerate kinase family. Monomer. It depends on Mg(2+) as a cofactor.

Its subcellular location is the cytoplasm. It catalyses the reaction (2R)-3-phosphoglycerate + ATP = (2R)-3-phospho-glyceroyl phosphate + ADP. It participates in carbohydrate degradation; glycolysis; pyruvate from D-glyceraldehyde 3-phosphate: step 2/5. Its function is as follows. Catalyzes one of the two ATP producing reactions in the glycolytic pathway via the reversible conversion of 1,3-diphosphoglycerate to 3-phosphoglycerate. In addition to its role as a glycolytic enzyme, it seems that PGK-1 acts as a polymerase alpha cofactor protein (primer recognition protein). May play a role in sperm motility. This Gallus gallus (Chicken) protein is Phosphoglycerate kinase (PGK).